A 438-amino-acid polypeptide reads, in one-letter code: Flotillin-2 (438 aa).

Belongs to the band 7/mec-2 family. Flotillin subfamily. In terms of assembly, heterooligomeric complex of flotillins 1 and 2.

Its subcellular location is the membrane. Its function is as follows. May play a role in axon growth and regeneration. May be involved in epidermal cell adhesion and epidermal structure and function. The chain is Flotillin-2 from Drosophila melanogaster (Fruit fly).